The sequence spans 68 residues: ATP synthase F(0) complex subunit 8 (68 aa).

Residues 8–24 form a helical membrane-spanning segment; it reads VWPTIITSMLLTLFLLM. K54 carries the N6-acetyllysine; alternate modification. Residue K54 is modified to N6-succinyllysine; alternate. K57 bears the N6-acetyllysine mark.

Belongs to the ATPase protein 8 family. Component of the ATP synthase complex composed at least of ATP5F1A/subunit alpha, ATP5F1B/subunit beta, ATP5MC1/subunit c (homooctomer), MT-ATP6/subunit a, MT-ATP8/subunit 8, ATP5ME/subunit e, ATP5MF/subunit f, ATP5MG/subunit g, ATP5MK/subunit k, ATP5MJ/subunit j, ATP5F1C/subunit gamma, ATP5F1D/subunit delta, ATP5F1E/subunit epsilon, ATP5PF/subunit F6, ATP5PB/subunit b, ATP5PD/subunit d, ATP5PO/subunit OSCP. ATP synthase complex consists of a soluble F(1) head domain (subunits alpha(3) and beta(3)) - the catalytic core - and a membrane F(0) domain - the membrane proton channel (subunits c, a, 8, e, f, g, k and j). These two domains are linked by a central stalk (subunits gamma, delta, and epsilon) rotating inside the F1 region and a stationary peripheral stalk (subunits F6, b, d, and OSCP). Interacts with PRICKLE3.

The protein resides in the mitochondrion membrane. Its function is as follows. Subunit 8, of the mitochondrial membrane ATP synthase complex (F(1)F(0) ATP synthase or Complex V) that produces ATP from ADP in the presence of a proton gradient across the membrane which is generated by electron transport complexes of the respiratory chain. ATP synthase complex consist of a soluble F(1) head domain - the catalytic core - and a membrane F(1) domain - the membrane proton channel. These two domains are linked by a central stalk rotating inside the F(1) region and a stationary peripheral stalk. During catalysis, ATP synthesis in the catalytic domain of F(1) is coupled via a rotary mechanism of the central stalk subunits to proton translocation. In vivo, can only synthesize ATP although its ATP hydrolase activity can be activated artificially in vitro. Part of the complex F(0) domain. The polypeptide is ATP synthase F(0) complex subunit 8 (Symphalangus syndactylus (Siamang)).